Consider the following 198-residue polypeptide: Probable GTP-binding protein EngB (198 aa).

The region spanning 21–195 is the EngB-type G domain; the sequence is NIPEVCFVGR…YDALIRLLEV (175 aa). Residues 29 to 36, 56 to 60, 75 to 78, 142 to 145, and 174 to 176 contribute to the GTP site; these read GRSNVGKS, GKTRL, DAPG, TKLD, and VSN. Mg(2+) contacts are provided by Ser-36 and Thr-58.

This sequence belongs to the TRAFAC class TrmE-Era-EngA-EngB-Septin-like GTPase superfamily. EngB GTPase family. Mg(2+) serves as cofactor.

Necessary for normal cell division and for the maintenance of normal septation. In Mesoplasma florum (strain ATCC 33453 / NBRC 100688 / NCTC 11704 / L1) (Acholeplasma florum), this protein is Probable GTP-binding protein EngB.